We begin with the raw amino-acid sequence, 704 residues long: UvrABC system protein C (704 aa).

The interval Met1–Ala77 is disordered. A compositionally biased stretch (acidic residues) spans Val49–Ala66. A compositionally biased stretch (low complexity) spans Glu67–Ala77. The GIY-YIG domain maps to Thr92–Val170. The 36-residue stretch at Arg280 to Ile315 folds into the UVR domain.

The protein belongs to the UvrC family. As to quaternary structure, interacts with UvrB in an incision complex.

Its subcellular location is the cytoplasm. In terms of biological role, the UvrABC repair system catalyzes the recognition and processing of DNA lesions. UvrC both incises the 5' and 3' sides of the lesion. The N-terminal half is responsible for the 3' incision and the C-terminal half is responsible for the 5' incision. This is UvrABC system protein C from Rhodopseudomonas palustris (strain ATCC BAA-98 / CGA009).